A 384-amino-acid chain; its full sequence is S-adenosylmethionine synthase (384 aa).

Histidine 15 is a binding site for ATP. Aspartate 17 serves as a coordination point for Mg(2+). Glutamate 43 contacts K(+). The L-methionine site is built by glutamate 56 and glutamine 99. The interval 99-109 (QSPDINQGVDR) is flexible loop. Residues 164-166 (DAK), 230-231 (RF), aspartate 239, 245-246 (RK), alanine 262, and lysine 266 contribute to the ATP site. An L-methionine-binding site is contributed by aspartate 239. Residue lysine 270 participates in L-methionine binding.

The protein belongs to the AdoMet synthase family. In terms of assembly, homotetramer; dimer of dimers. The cofactor is Mg(2+). It depends on K(+) as a cofactor.

It is found in the cytoplasm. It catalyses the reaction L-methionine + ATP + H2O = S-adenosyl-L-methionine + phosphate + diphosphate. Its pathway is amino-acid biosynthesis; S-adenosyl-L-methionine biosynthesis; S-adenosyl-L-methionine from L-methionine: step 1/1. Its function is as follows. Catalyzes the formation of S-adenosylmethionine (AdoMet) from methionine and ATP. The overall synthetic reaction is composed of two sequential steps, AdoMet formation and the subsequent tripolyphosphate hydrolysis which occurs prior to release of AdoMet from the enzyme. This is S-adenosylmethionine synthase from Erwinia tasmaniensis (strain DSM 17950 / CFBP 7177 / CIP 109463 / NCPPB 4357 / Et1/99).